Reading from the N-terminus, the 973-residue chain is Probable outer membrane protein pmp13 (973 aa).

A signal peptide spans 1–24; it reads MKTSIRKFLISTTLAPCFASTAFT. Positions 284-293 are enriched in polar residues; that stretch reads QNNTASPQNS. The tract at residues 284-303 is disordered; that stretch reads QNNTASPQNSLPAPTPPPTP. The Autotransporter domain maps to 691–973; it reads EDVPGKQLSI…TLDIGSKLRF (283 aa).

It belongs to the PMP outer membrane protein family.

It localises to the secreted. The protein localises to the cell wall. It is found in the cell outer membrane. The chain is Probable outer membrane protein pmp13 (pmp13) from Chlamydia pneumoniae (Chlamydophila pneumoniae).